The sequence spans 336 residues: Ferredoxin--NADP reductase (336 aa).

Residues aspartate 37, glutamine 45, tyrosine 50, valine 90, phenylalanine 124, aspartate 286, and threonine 327 each coordinate FAD.

The protein belongs to the ferredoxin--NADP reductase type 2 family. In terms of assembly, homodimer. FAD serves as cofactor.

The enzyme catalyses 2 reduced [2Fe-2S]-[ferredoxin] + NADP(+) + H(+) = 2 oxidized [2Fe-2S]-[ferredoxin] + NADPH. The chain is Ferredoxin--NADP reductase from Enterococcus faecalis (strain ATCC 700802 / V583).